Here is a 271-residue protein sequence, read N- to C-terminus: Plasmanylethanolamine desaturase 1 (271 aa).

The disordered stretch occupies residues 1 to 25; that stretch reads MAGAEDAPGRQPELDEDETAEGRRW. The next 3 helical transmembrane spans lie at 48–68, 75–95, and 166–186; these read WCSV…LLLL, PLVI…SGLV, and LYPW…TNQI. Residues 187-191 carry the Histidine box-1 motif; sequence HKWSH. The Histidine box-2 signature appears at 214–218; sequence HHRIH.

The protein belongs to the fatty acid desaturase CarF family.

It localises to the endoplasmic reticulum membrane. The catalysed reaction is a 1-(1,2-saturated alkyl)-2-acyl-sn-glycero-3-phosphoethanolamine + 2 Fe(II)-[cytochrome b5] + O2 + 2 H(+) = a 1-O-(1Z-alkenyl)-2-acyl-sn-glycero-3-phosphoethanolamine + 2 Fe(III)-[cytochrome b5] + 2 H2O. It carries out the reaction a 1-O-hexadecyl-2-acyl-sn-glycero-3-phosphoethanolamine + 2 Fe(II)-[cytochrome b5] + O2 + 2 H(+) = a 1-O-(1Z-hexadecenyl)-2-acyl-sn-glycero-3-phosphoethanolamine + 2 Fe(III)-[cytochrome b5] + 2 H2O. The enzyme catalyses a 1-O-octadecyl-2-acyl-sn-glycero-3-phosphoethanolamine + 2 Fe(II)-[cytochrome b5] + O2 + 2 H(+) = a 1-O-(1Z-octadecenyl)-2-acyl-sn-glycero-3-phosphoethanolamine + 2 Fe(III)-[cytochrome b5] + 2 H2O. It catalyses the reaction a 1-O-(9Z-octadecenyl)-2-acyl-sn-glycero-3-phosphoethanolamine + 2 Fe(II)-[cytochrome b5] + O2 + 2 H(+) = a 1-O-(1Z,9Z-octadecadienyl)-2-acyl-sn-glycero-3-phosphoethanolamine + 2 Fe(III)-[cytochrome b5] + 2 H2O. The protein operates within lipid metabolism; fatty acid metabolism. Its function is as follows. Plasmanylethanolamine desaturase involved in plasmalogen biogenesis in the endoplasmic reticulum membrane. Plasmalogens are glycerophospholipids with a hydrocarbon chain linked by a vinyl ether bond at the glycerol sn-1 position, and are involved in antioxidative and signaling mechanisms. The chain is Plasmanylethanolamine desaturase 1 from Mus musculus (Mouse).